We begin with the raw amino-acid sequence, 283 residues long: Bifunctional protein FolD (283 aa).

NADP(+) is bound by residues 165–167 (GRG), T192, and V233.

The protein belongs to the tetrahydrofolate dehydrogenase/cyclohydrolase family. Homodimer.

It carries out the reaction (6R)-5,10-methylene-5,6,7,8-tetrahydrofolate + NADP(+) = (6R)-5,10-methenyltetrahydrofolate + NADPH. The catalysed reaction is (6R)-5,10-methenyltetrahydrofolate + H2O = (6R)-10-formyltetrahydrofolate + H(+). The protein operates within one-carbon metabolism; tetrahydrofolate interconversion. Functionally, catalyzes the oxidation of 5,10-methylenetetrahydrofolate to 5,10-methenyltetrahydrofolate and then the hydrolysis of 5,10-methenyltetrahydrofolate to 10-formyltetrahydrofolate. This is Bifunctional protein FolD from Mycolicibacterium smegmatis (strain ATCC 700084 / mc(2)155) (Mycobacterium smegmatis).